Here is a 149-residue protein sequence, read N- to C-terminus: Transcription factor bHLH153 (149 aa).

The 50-residue stretch at 27 to 76 (RHKSDLSFSSKERKDKVGERISALQQIVSPYGKTDTASVLLDAMHYIEFL) folds into the bHLH domain.

This sequence belongs to the bHLH protein family.

Its subcellular location is the nucleus. This chain is Transcription factor bHLH153, found in Arabidopsis thaliana (Mouse-ear cress).